The sequence spans 134 residues: Small ribosomal subunit protein uS8c (134 aa).

It belongs to the universal ribosomal protein uS8 family. In terms of assembly, part of the 30S ribosomal subunit.

The protein localises to the plastid. The protein resides in the chloroplast. One of the primary rRNA binding proteins, it binds directly to 16S rRNA central domain where it helps coordinate assembly of the platform of the 30S subunit. The sequence is that of Small ribosomal subunit protein uS8c (rps8) from Bigelowiella natans (Pedinomonas minutissima).